The following is a 450-amino-acid chain: Probable helicase D10 (450 aa).

Residues 95-240 (PIYEECDDTC…MFKDFFGYKI (146 aa)) enclose the Helicase ATP-binding domain. 108 to 115 (GKPGFGKT) is an ATP binding site. The DEAH box motif lies at 193–196 (DEVH). Residues 289 to 439 (NLAHLYVNMG…TITMTPEKAV (151 aa)) form the Helicase C-terminal domain.

The catalysed reaction is ATP + H2O = ADP + phosphate + H(+). This chain is Probable helicase D10 (D10), found in Escherichia phage T5 (Enterobacteria phage T5).